Here is a 587-residue protein sequence, read N- to C-terminus: MAEYVNYVLGSLYVSDTATSTIPTDVRNFIAPPFPLNFWSGPTFTVSSNTRADPLKLVAARHRAAAAAIDTLEAQSQYGVANVDALIRPLERQVAKVADALAALEDAARAAESADAATPQVNASEADQRPDNIGQSLSEIQIAKNDVPMEFDTNLAVDLLATVFVSRAAGGSNGVVFGTWYRALQDRLVTERPVATRSIDYRDGRMSKTFMTTAVVSLQSCGRLYIGNRPYSAFEAAVLCLHLAHRAVNSNYTYPTSFSGLIEQLPVYIEAFSTALGDGTLGKVGYEFNGARLPKNQFHVPGGGGRYERGALNGHGVLETLIRLKVLPAIPGSLGTTSTAVGPELDADQTAYIDDVNKAAAAFLVRAQNLFLTEDQTLLRSTINTITALLLLRRLLWNGNVYTDRLRNNFQLGAIVPNLAVSQRDARGASGGDAAAMVSRSGNNNFTFLCERYVSPIYIANREVELTQLFPGLAALCLDAQTVARDQPQHRAVNVSTGRNQTNLTRLIGIELENRRRTAPVPINEVLAAHDAVALQYERGLGLLMQKPRLRASLEETRRLGQFNVASDYDLLYFVCLGYIPSLTSAM.

Residues Met-1–Asp-53 form an interaction with major capsid protein/MCP region. Residues Ser-113–Asn-132 form a disordered region.

Belongs to the herpesviridae CVC2 protein family. As to quaternary structure, heterodimerizes with CVC1. Interacts with major capsid protein/MCP and triplex capsid protein 1/TRX1 at the pentamer vertices. Interacts with the large tegument protein/LTP.

Its subcellular location is the virion. The protein localises to the host nucleus. Functionally, capsid vertex-specific component that plays a role during viral DNA encapsidation, assuring correct genome cleavage and presumably stabilizing capsids that contain full-length viral genomes. Participates in the interaction between the capsid and the tegument through interaction with the large tegument protein/LTP. The chain is Capsid vertex component 2 from Equine herpesvirus 1 (strain Ab4p) (EHV-1).